The following is a 205-amino-acid chain: Large ribosomal subunit protein uL3 (205 aa).

This sequence belongs to the universal ribosomal protein uL3 family. As to quaternary structure, part of the 50S ribosomal subunit. Forms a cluster with proteins L14 and L19.

Its function is as follows. One of the primary rRNA binding proteins, it binds directly near the 3'-end of the 23S rRNA, where it nucleates assembly of the 50S subunit. The sequence is that of Large ribosomal subunit protein uL3 from Thermosipho melanesiensis (strain DSM 12029 / CIP 104789 / BI429).